The primary structure comprises 97 residues: Large ribosomal subunit protein eL21 (97 aa).

Residues 1–12 (MPSSNGPRQATR) are compositionally biased toward polar residues. The tract at residues 1–35 (MPSSNGPRQATRNKLKNDARERGTSPPQRSIEEYD) is disordered.

Belongs to the eukaryotic ribosomal protein eL21 family.

In Natronomonas pharaonis (strain ATCC 35678 / DSM 2160 / CIP 103997 / JCM 8858 / NBRC 14720 / NCIMB 2260 / Gabara) (Halobacterium pharaonis), this protein is Large ribosomal subunit protein eL21.